A 287-amino-acid polypeptide reads, in one-letter code: Pantothenate synthetase (287 aa).

Position 37–44 (37–44 (MGALHEGH)) interacts with ATP. His-44 functions as the Proton donor in the catalytic mechanism. Gln-68 contacts (R)-pantoate. Gln-68 is a beta-alanine binding site. 154-157 (GQKD) is an ATP binding site. Gln-160 is a binding site for (R)-pantoate. ATP-binding positions include Val-183 and 191–194 (LSSR).

It belongs to the pantothenate synthetase family. Homodimer.

The protein localises to the cytoplasm. The enzyme catalyses (R)-pantoate + beta-alanine + ATP = (R)-pantothenate + AMP + diphosphate + H(+). It functions in the pathway cofactor biosynthesis; (R)-pantothenate biosynthesis; (R)-pantothenate from (R)-pantoate and beta-alanine: step 1/1. Its function is as follows. Catalyzes the condensation of pantoate with beta-alanine in an ATP-dependent reaction via a pantoyl-adenylate intermediate. The protein is Pantothenate synthetase of Leifsonia xyli subsp. xyli (strain CTCB07).